A 313-amino-acid polypeptide reads, in one-letter code: tRNA uridine(34) hydroxylase (313 aa).

The 95-residue stretch at 124–218 (SDPEVLLIDT…YLEEVPQEET (95 aa)) folds into the Rhodanese domain. The active-site Cysteine persulfide intermediate is cysteine 178.

It belongs to the TrhO family.

The enzyme catalyses uridine(34) in tRNA + AH2 + O2 = 5-hydroxyuridine(34) in tRNA + A + H2O. Catalyzes oxygen-dependent 5-hydroxyuridine (ho5U) modification at position 34 in tRNAs. The sequence is that of tRNA uridine(34) hydroxylase from Pseudomonas fluorescens (strain SBW25).